The primary structure comprises 526 residues: Glucose-6-phosphate isomerase (526 aa).

Glu343 functions as the Proton donor in the catalytic mechanism. Catalysis depends on residues His374 and Lys494.

Belongs to the GPI family.

It is found in the cytoplasm. It catalyses the reaction alpha-D-glucose 6-phosphate = beta-D-fructose 6-phosphate. The protein operates within carbohydrate biosynthesis; gluconeogenesis. Its pathway is carbohydrate degradation; glycolysis; D-glyceraldehyde 3-phosphate and glycerone phosphate from D-glucose: step 2/4. In terms of biological role, catalyzes the reversible isomerization of glucose-6-phosphate to fructose-6-phosphate. The polypeptide is Glucose-6-phosphate isomerase (Dechloromonas aromatica (strain RCB)).